Here is a 103-residue protein sequence, read N- to C-terminus: Small ribosomal subunit protein uS10 (103 aa).

Belongs to the universal ribosomal protein uS10 family. In terms of assembly, part of the 30S ribosomal subunit.

Involved in the binding of tRNA to the ribosomes. This chain is Small ribosomal subunit protein uS10, found in Aliivibrio fischeri (strain ATCC 700601 / ES114) (Vibrio fischeri).